The sequence spans 410 residues: MLYYLFEYFDKTLDVPGTGVFQYITFRSALAFMLSLLLSTIYGKRVINFLRRQQVGETVRELGLAGQNEKAGTPTMGGLIIIFATLVPVFLFARLHNIYIVLLIVTTLWMGTIGFVDDYIKIFKKDKQGLKGIFKVIGQVGLGIIVGAVLYFNPAVTVRTDTGKTDVFKTAANTTVVLPAPVEEKSTATTIPFVKNNEFDYAEVLSFMGDGYEKWAWLVFIPVVIFIITAVSNGANLTDGIDGLAAGTSAVSVLALGIFTFVSGNIIFSNYLNIMYIPNSGEMTVFISAFVGALIGFLWYNSFPASVFMGDTGSLTIGGIIAVLAIAVRKEILIVLFCGIFLAESASVIIQVTYFKYTKKRFGEGRRIFLMSPLHHHYQKKGYHESKIVTRFWIVAVMLAILSIVTLKLR.

10 helical membrane passes run 23-43 (YITF…TIYG), 73-93 (TPTM…FLFA), 96-116 (HNIY…IGFV), 132-152 (GIFK…VLYF), 215-235 (WAWL…SNGA), 248-268 (TSAV…NIIF), 285-305 (VFIS…SFPA), 307-327 (VFMG…LAIA), 332-352 (ILIV…IIQV), and 387-407 (KIVT…IVTL).

The protein belongs to the glycosyltransferase 4 family. MraY subfamily. Requires Mg(2+) as cofactor.

The protein localises to the cell inner membrane. It catalyses the reaction UDP-N-acetyl-alpha-D-muramoyl-L-alanyl-gamma-D-glutamyl-meso-2,6-diaminopimeloyl-D-alanyl-D-alanine + di-trans,octa-cis-undecaprenyl phosphate = di-trans,octa-cis-undecaprenyl diphospho-N-acetyl-alpha-D-muramoyl-L-alanyl-D-glutamyl-meso-2,6-diaminopimeloyl-D-alanyl-D-alanine + UMP. The protein operates within cell wall biogenesis; peptidoglycan biosynthesis. Functionally, catalyzes the initial step of the lipid cycle reactions in the biosynthesis of the cell wall peptidoglycan: transfers peptidoglycan precursor phospho-MurNAc-pentapeptide from UDP-MurNAc-pentapeptide onto the lipid carrier undecaprenyl phosphate, yielding undecaprenyl-pyrophosphoryl-MurNAc-pentapeptide, known as lipid I. The polypeptide is Phospho-N-acetylmuramoyl-pentapeptide-transferase (Flavobacterium johnsoniae (strain ATCC 17061 / DSM 2064 / JCM 8514 / BCRC 14874 / CCUG 350202 / NBRC 14942 / NCIMB 11054 / UW101) (Cytophaga johnsonae)).